The primary structure comprises 208 residues: Thymidylate kinase (208 aa).

9-16 (GGEGCGKS) contacts ATP.

It belongs to the thymidylate kinase family.

The catalysed reaction is dTMP + ATP = dTDP + ADP. Phosphorylation of dTMP to form dTDP in both de novo and salvage pathways of dTTP synthesis. This chain is Thymidylate kinase, found in Dehalococcoides mccartyi (strain ATCC BAA-2100 / JCM 16839 / KCTC 5957 / BAV1).